We begin with the raw amino-acid sequence, 419 residues long: 3-phosphoshikimate 1-carboxyvinyltransferase (419 aa).

Residues Lys-21, Ser-22, and Arg-26 each coordinate 3-phosphoshikimate. Residue Lys-21 participates in phosphoenolpyruvate binding. 2 residues coordinate phosphoenolpyruvate: Gly-91 and Arg-119. Ser-164, Ser-165, Gln-166, Ser-191, Asp-305, and Lys-332 together coordinate 3-phosphoshikimate. Gln-166 provides a ligand contact to phosphoenolpyruvate. The Proton acceptor role is filled by Asp-305. Residues Arg-336 and Arg-376 each contribute to the phosphoenolpyruvate site.

This sequence belongs to the EPSP synthase family. As to quaternary structure, monomer.

Its subcellular location is the cytoplasm. It carries out the reaction 3-phosphoshikimate + phosphoenolpyruvate = 5-O-(1-carboxyvinyl)-3-phosphoshikimate + phosphate. The protein operates within metabolic intermediate biosynthesis; chorismate biosynthesis. Its function is as follows. Catalyzes the transfer of the enolpyruvyl moiety of phosphoenolpyruvate (PEP) to the 5-hydroxyl of shikimate-3-phosphate (S3P) to produce enolpyruvyl shikimate-3-phosphate and inorganic phosphate. The protein is 3-phosphoshikimate 1-carboxyvinyltransferase of Methanothermobacter thermautotrophicus (strain ATCC 29096 / DSM 1053 / JCM 10044 / NBRC 100330 / Delta H) (Methanobacterium thermoautotrophicum).